Reading from the N-terminus, the 313-residue chain is Ribosomal RNA small subunit methyltransferase H (313 aa).

Residues 35–37, aspartate 55, phenylalanine 79, aspartate 100, and glutamine 107 contribute to the S-adenosyl-L-methionine site; that span reads GGH.

Belongs to the methyltransferase superfamily. RsmH family.

The protein localises to the cytoplasm. The enzyme catalyses cytidine(1402) in 16S rRNA + S-adenosyl-L-methionine = N(4)-methylcytidine(1402) in 16S rRNA + S-adenosyl-L-homocysteine + H(+). Specifically methylates the N4 position of cytidine in position 1402 (C1402) of 16S rRNA. This chain is Ribosomal RNA small subunit methyltransferase H, found in Burkholderia mallei (strain NCTC 10247).